The following is a 3677-amino-acid chain: Dystrophin (3677 aa).

The interval 1 to 240 (MLWWEEVEDC…YITSLFQVLP (240 aa)) is actin-binding. 2 Calponin-homology (CH) domains span residues 15–119 (DVQK…LHWQ) and 134–240 (TNSE…QVLP). Positions 63–72 (PKEKGSTRVH) are ANK2- and ANK-3 binding. Spectrin repeat units follow at residues 342 to 447 (LDSY…SNLH), 451 to 557 (MDLQ…LLQD), 560 to 668 (LKWQ…QISQ), 728 to 828 (DITE…NWLE), 831 to 935 (NNII…ELQT), 944 to 1046 (RYQE…KLEE), 1049 to 1154 (NKLR…EALK), 1163 to 1264 (LQKD…TLEE), 1268 to 1464 (CWHE…LFQK), 1469 to 1569 (EQRL…QLEK), 1573 to 1676 (LSRK…NLLL), 1680 to 1777 (KHME…TGKA), 1779 to 1875 (IPLK…KALE), 1878 to 1980 (HQWY…TLHE), 2001 to 2098 (YLTE…ERQG), 2106 to 2209 (KWRH…RVEE), 2215 to 2316 (SEFQ…GELE), 2317 to 2415 (VHIK…LRTK), 2465 to 2569 (ADFN…QLNE), 2576 to 2678 (QWLE…ALEE), 2682 to 2786 (LLQQ…KKSL), 2800 to 2922 (KRLH…RKID), and 2927 to 3032 (RLQE…QLHE). The segment at 1416–1914 (SDLTSHEISL…PEPRDERKIK (499 aa)) is interaction with SYNM. The WW domain maps to 3047 to 3080 (TSVQGPWERAISPNKVPYYINHETQTTCWDHPKM). The segment at 3050 to 3400 (QGPWERAISP…TVLEGDNMET (351 aa)) is interaction with SYNM. The ZZ-type; degenerate zinc finger occupies 3300-3356 (KHQAKCNICKECPIIGFRYRSLKHFNYDICQSCFFSGRVAKGHKMHYPMVEYCTPTT). Zn(2+) contacts are provided by Cys-3305, Cys-3308, Cys-3329, and Cys-3332. Residues 3458–3510 (DDEHLLIQHYCQSLNQDSPLSQPRSPAQILISLESEERGELERILADLEEENR) are binds to SNTB1. Residues Ser-3475, Ser-3482, and Ser-3492 each carry the phosphoserine modification. Disordered stretches follow at residues 3520 to 3546 (KQQH…QSPR) and 3595 to 3677 (EAKV…EDTM). Polar residues-rich tracts occupy residues 3599–3618 (NGTT…SSQP) and 3654–3664 (QLNNSFPSSRG). Ser-3604, Ser-3605, Ser-3609, Ser-3615, Ser-3616, and Ser-3658 each carry phosphoserine.

Interacts with SYNM. Interacts with the syntrophins SNTG1 and SNTG2. Interacts with KRT19. Component of the dystrophin-associated glycoprotein complex which is composed of three subcomplexes: a cytoplasmic complex comprised of DMD (or UTRN), DTNA and a number of syntrophins, such as SNTB1, SNTB2, SNTG1 and SNTG2, the transmembrane dystroglycan complex, and the sarcoglycan-sarcospan complex. Interacts with DAG1 (betaDAG1) with DMD; the interaction is inhibited by phosphorylation on the PPXY motif of DAG1. Interacts with SYNM; SNTA1 and SNTB1. Interacts with CMYA5. Directly interacts with ANK2 and ANK3; these interactions do not interfere with betaDAG1-binding and are necessary for proper localization in muscle cells. Identified in a dystroglycan complex that contains at least PRX, DRP2, UTRN, DMD and DAG1. Interacts with DTNB. Interacts with PGM5; the interaction is direct. Interacts with NOS1; localizes NOS1 to sarcolemma in muscle cells. In terms of tissue distribution, strongly expressed in skeletal muscle and weak expression observed in newborn brain which increases in adult brain.

The protein localises to the cell membrane. It is found in the sarcolemma. Its subcellular location is the cytoplasm. The protein resides in the cytoskeleton. It localises to the postsynaptic cell membrane. Its function is as follows. Anchors the extracellular matrix to the cytoskeleton via F-actin. Ligand for dystroglycan. Component of the dystrophin-associated glycoprotein complex which accumulates at the neuromuscular junction (NMJ) and at a variety of synapses in the peripheral and central nervous systems and has a structural function in stabilizing the sarcolemma. Also implicated in signaling events and synaptic transmission. This is Dystrophin (Dmd) from Rattus norvegicus (Rat).